We begin with the raw amino-acid sequence, 302 residues long: Intermediate capsid protein VP8 (302 aa).

It localises to the virion. Self assembles to form an icosahedral capsid with a T=13 symmetry, which consists of 230 trimers, with channels at each of its five-fold vertices. The chain is Intermediate capsid protein VP8 (Segment-8) from Banna virus (BAV).